We begin with the raw amino-acid sequence, 626 residues long: Chaperone protein HtpG (626 aa).

The tract at residues 1–339 (MSQNQETRGF…SNDLPLNVSR (339 aa)) is a; substrate-binding. Residues 340-555 (EILQDNKITA…NDQMTTQMAK (216 aa)) form a b region. The segment at 556 to 626 (LFAAAGQPVP…FIKRINKLLG (71 aa)) is c.

It belongs to the heat shock protein 90 family. As to quaternary structure, homodimer.

The protein resides in the cytoplasm. In terms of biological role, molecular chaperone. Has ATPase activity. The chain is Chaperone protein HtpG from Haemophilus influenzae (strain PittEE).